Consider the following 147-residue polypeptide: Delta-latroinsectotoxin-Lhe1a (147 aa).

ANK repeat units lie at residues 57–59 (VSI), 66–78 (NNWTPLHFAIYFK), 79–96 (KNPAVSAVLILENKDIEA), and 98–125 (TSIMLIVQKLLLELYNYFINNYAETLDE).

This sequence belongs to the cationic peptide 01 (latrotoxin) family. 04 (delta-latroinsectotoxin) subfamily. Homotetramer in membrane. As to expression, expressed by the venom gland.

It localises to the secreted. Its subcellular location is the target cell membrane. In terms of biological role, insecticidal presynaptic neurotoxin that induces massive neurotransmitter release at insect (but not vertebrate) neuromuscular junctions. Native toxin forms cation-permeable pores (with high permeability to calcium) in lipid membranes locust muscle membrane and artificial lipid bilayers. May bind to insect neurexin-1 homolog, insect adhesion G protein-coupled receptor L1 homolog, and insect receptor-type tyrosine-protein phosphatase S homolog, and induces neurotransmitter exocytosis both by forming tetrameric pores in membranes and signaling via G protein-coupled receptor. Oligomerization is a process independent of divalent cations. This Latrodectus hesperus (Western black widow spider) protein is Delta-latroinsectotoxin-Lhe1a.